Here is a 51-residue protein sequence, read N- to C-terminus: Large ribosomal subunit protein eL39x (51 aa).

Belongs to the eukaryotic ribosomal protein eL39 family.

This chain is Large ribosomal subunit protein eL39x (RPL39C), found in Oryza sativa subsp. japonica (Rice).